A 56-amino-acid polypeptide reads, in one-letter code: Cruciferin (56 aa).

A Phosphothreonine modification is found at threonine 45.

This sequence belongs to the 11S seed storage protein (globulins) family. Hexamer; each subunit is composed of an acidic and a basic chain derived from a single precursor and linked by a disulfide bond.

Its function is as follows. This is a seed storage protein. In Sinapis alba (White mustard), this protein is Cruciferin.